The primary structure comprises 429 residues: Probable M18 family aminopeptidase 2 (429 aa).

Residues H82, H156, and H401 each coordinate Zn(2+).

The protein belongs to the peptidase M18 family. It depends on Zn(2+) as a cofactor.

This is Probable M18 family aminopeptidase 2 from Pseudomonas aeruginosa (strain LESB58).